Here is a 129-residue protein sequence, read N- to C-terminus: MAKVYATGRRKTSIAKVWLESGNGQLTINGQTLDAWLGGHESIKKRVMQPLNVAKQETSVNIIVKTLGGGYSAQADAARHGISRALVAFDEQFRTILKPYGLLTRDSRSVERKKFGKKKARKSSQFSKR.

The protein belongs to the universal ribosomal protein uS9 family.

This Aliarcobacter butzleri (strain RM4018) (Arcobacter butzleri) protein is Small ribosomal subunit protein uS9.